The following is a 373-amino-acid chain: Putative F-box/kelch-repeat protein At2g41360 (373 aa).

An F-box domain is found at 8–54 (WSSLSCLPDEMVLNCLARVPRRYYENISCVSVRLRSLVRTPELYRMR). Kelch repeat units follow at residues 116-162 (EIYF…VFDG) and 163-208 (KIHV…MVSS).

The polypeptide is Putative F-box/kelch-repeat protein At2g41360 (Arabidopsis thaliana (Mouse-ear cress)).